The chain runs to 296 residues: N-acetylmuramic acid 6-phosphate etherase (296 aa).

Positions 54–217 constitute an SIS domain; that stretch reads VISCFQKGGR…STASMVGIGK (164 aa). Catalysis depends on E82, which acts as the Proton donor. Residue E113 is part of the active site.

It belongs to the GCKR-like family. MurNAc-6-P etherase subfamily. Homodimer.

The enzyme catalyses N-acetyl-D-muramate 6-phosphate + H2O = N-acetyl-D-glucosamine 6-phosphate + (R)-lactate. It functions in the pathway amino-sugar metabolism; N-acetylmuramate degradation. In terms of biological role, specifically catalyzes the cleavage of the D-lactyl ether substituent of MurNAc 6-phosphate, producing GlcNAc 6-phosphate and D-lactate. The protein is N-acetylmuramic acid 6-phosphate etherase of Listeria monocytogenes serotype 4b (strain CLIP80459).